Consider the following 131-residue polypeptide: Methylglyoxal synthase (131 aa).

The 131-residue stretch at 1 to 131 folds into the MGS-like domain; that stretch reads MKIALIAHDK…GDLDYRKLRK (131 aa). Substrate is bound by residues H8, K12, 34 to 37, and 54 to 55; these read TGTT and SG. D60 (proton donor/acceptor) is an active-site residue. H87 provides a ligand contact to substrate.

The protein belongs to the methylglyoxal synthase family.

It catalyses the reaction dihydroxyacetone phosphate = methylglyoxal + phosphate. Its function is as follows. Catalyzes the formation of methylglyoxal from dihydroxyacetone phosphate. The polypeptide is Methylglyoxal synthase (Bacillus cereus (strain ATCC 14579 / DSM 31 / CCUG 7414 / JCM 2152 / NBRC 15305 / NCIMB 9373 / NCTC 2599 / NRRL B-3711)).